Here is a 241-residue protein sequence, read N- to C-terminus: Putative CRISPR-associated endoribonuclease-like protein Cas6 (241 aa).

This sequence belongs to the CRISPR-associated protein Cas6/Cse3/CasE family. Binds crRNA.

In terms of biological role, CRISPR (clustered regularly interspaced short palindromic repeat), is an adaptive immune system that provides protection against mobile genetic elements (viruses, transposable elements and conjugative plasmids). CRISPR clusters contain sequences complementary to antecedent mobile elements and target invading nucleic acids. CRISPR clusters are transcribed and processed into CRISPR RNA (crRNA), also called psiRNA (prokaryotic silencing) in this organism (Potential). The sequence is that of Putative CRISPR-associated endoribonuclease-like protein Cas6 (cas6b) from Pyrococcus furiosus (strain ATCC 43587 / DSM 3638 / JCM 8422 / Vc1).